A 262-amino-acid chain; its full sequence is MTDPTPAAVDLDLLAEPRLVVEPGLGARVAAVAGPVLQGMGYRLVRIKVSGELGCTVQIMAERPDGTMLVEDCEAISHALSPVLDIADPVERAYRLEISSPGIDRPLVRRSDFERYEGYLVKIEMAVAVGGRKRFRGLLGPLQGDAVLLAREGARDGEDPNSLLPLEDIASANLVLTDELIAESMRRGKIAEREMKRELGVLPPPPPHAKKSDPTKSNAPKAKLPKAKLKAAKKPPPTNTKEHRLAAAERKRLGQTDPTEGD.

Residues Arg-197–Asp-262 are disordered. Over residues Lys-223 to Lys-233 the composition is skewed to basic residues. Residues Thr-240–Gly-254 show a composition bias toward basic and acidic residues.

This sequence belongs to the RimP family.

The protein resides in the cytoplasm. Required for maturation of 30S ribosomal subunits. This Rhodopseudomonas palustris (strain BisB18) protein is Ribosome maturation factor RimP.